The primary structure comprises 293 residues: Large ribosomal subunit protein uL18 (293 aa).

A disordered region spans residues 249 to 273 (DASPAAKKAAKPSKRHTAKRLTYDE). The segment covering 256-267 (KAAKPSKRHTAK) has biased composition (basic residues).

The protein belongs to the universal ribosomal protein uL18 family. In terms of assembly, component of the large ribosomal subunit (LSU).

Its subcellular location is the cytoplasm. The protein localises to the nucleus. Functionally, component of the ribosome, a large ribonucleoprotein complex responsible for the synthesis of proteins in the cell. The small ribosomal subunit (SSU) binds messenger RNAs (mRNAs) and translates the encoded message by selecting cognate aminoacyl-transfer RNA (tRNA) molecules. The large subunit (LSU) contains the ribosomal catalytic site termed the peptidyl transferase center (PTC), which catalyzes the formation of peptide bonds, thereby polymerizing the amino acids delivered by tRNAs into a polypeptide chain. The nascent polypeptides leave the ribosome through a tunnel in the LSU and interact with protein factors that function in enzymatic processing, targeting, and the membrane insertion of nascent chains at the exit of the ribosomal tunnel. The protein is Large ribosomal subunit protein uL18 (rpl-5) of Caenorhabditis elegans.